The following is a 310-amino-acid chain: AMMECR1-like protein (310 aa).

A disordered region spans residues 26–92 (LSGSGTHSHG…SGALSPLPRP (67 aa)). Composition is skewed to polar residues over residues 28–66 (GSGTHSHGNQSTTVPGSSSGPLQNHQHVDNSSGRENVSD) and 74–84 (SPITRMNTASG). Ser-74 carries the phosphoserine modification. In terms of domain architecture, AMMECR1 spans 97 to 291 (NSTKNLVVTA…ISYAEYIASR (195 aa)).

The polypeptide is AMMECR1-like protein (Ammecr1l) (Mus musculus (Mouse)).